Reading from the N-terminus, the 247-residue chain is 14-3-3 protein gamma-A (247 aa).

It belongs to the 14-3-3 family. In terms of assembly, homodimer, and heterodimer with other family members.

Its subcellular location is the cytoplasm. Functionally, adapter protein implicated in the regulation of a large spectrum of both general and specialized signaling pathways. Binds to a large number of partners, usually by recognition of a phosphoserine or phosphothreonine motif. Binding generally results in the modulation of the activity of the binding partner. The chain is 14-3-3 protein gamma-A (ywhag-a) from Xenopus laevis (African clawed frog).